The following is a 277-amino-acid chain: Tetrahydroxynaphthalene reductase PfmaG (277 aa).

The NADP(+) site is built by Ile36, Asp82, and Asn109. Residues Ser158, Ser159, and Tyr173 each act as proton donor in the active site. NADP(+) is bound by residues Tyr173, Lys177, Ile206, and Thr208. The active-site Lowers pKa of active site Tyr is the Lys177.

This sequence belongs to the short-chain dehydrogenases/reductases (SDR) family.

It catalyses the reaction scytalone + NADP(+) = naphthalene-1,3,6,8-tetrol + NADPH + H(+). It participates in pigment biosynthesis; melanin biosynthesis. Functionally, tetrahydroxynaphthalene reductase; part of the gene cluster that mediates the biosynthesis of dihydroxynaphthalene (DHN)-melanin, a bluish-green pigment forming a dark layer in the conidial wall that protects the conidia from UV radiations. The first step of the pathway is the production of the pentaketide 1,3,6,8-tetrahydroxynaphthalene (1,3,6,8-THN or T4HN) by the polyketide synthase PfmaE though condensation of acetyl-CoA with malonyl-CoA. T4HN is not stable and easily oxidizes into the stable form flaviolin. T4HN is also substrate of the hydroxynaphthalene reductase PfmaG to yield scytalone. The scytalone dehydratase PfmaJ then reduces scytalone to 1,3,8-THN. 1,3,8-THN is then substrate of the hydroxynaphthalene reductase PfmaI to yield vermelone. Vermelone is further converted by the multicopper oxidase PfmaD to 1,8-DHN. Finally the laccase PFICI_06862 transforms 1,8-DHN to DHN-melanin. The roles of the 5-oxoprolinase PfmaA and the proline iminopeptidase PfmaB within the cluster have not been elucidated yet. The sequence is that of Tetrahydroxynaphthalene reductase PfmaG from Pestalotiopsis fici (strain W106-1 / CGMCC3.15140).